We begin with the raw amino-acid sequence, 512 residues long: Glycerol kinase (512 aa).

Thr13 is a binding site for ADP. Positions 13, 14, and 15 each coordinate ATP. Residue Thr13 coordinates sn-glycerol 3-phosphate. Arg17 serves as a coordination point for ADP. Residues Arg83, Glu84, Tyr135, and Asp252 each coordinate sn-glycerol 3-phosphate. Residues Arg83, Glu84, Tyr135, Asp252, and Gln253 each coordinate glycerol. Residues Thr274 and Gly318 each coordinate ADP. ATP-binding residues include Thr274, Gly318, Gln322, and Gly419. Residues Gly419 and Asn423 each coordinate ADP.

The protein belongs to the FGGY kinase family.

The catalysed reaction is glycerol + ATP = sn-glycerol 3-phosphate + ADP + H(+). Its pathway is polyol metabolism; glycerol degradation via glycerol kinase pathway; sn-glycerol 3-phosphate from glycerol: step 1/1. Its activity is regulated as follows. Inhibited by fructose 1,6-bisphosphate (FBP). Its function is as follows. Key enzyme in the regulation of glycerol uptake and metabolism. Catalyzes the phosphorylation of glycerol to yield sn-glycerol 3-phosphate. The chain is Glycerol kinase from Corynebacterium kroppenstedtii (strain DSM 44385 / JCM 11950 / CIP 105744 / CCUG 35717).